A 298-amino-acid polypeptide reads, in one-letter code: UDP-3-O-acyl-N-acetylglucosamine deacetylase (298 aa).

Zn(2+)-binding residues include histidine 75, histidine 232, and aspartate 236. The active-site Proton donor is histidine 259.

Belongs to the LpxC family. Zn(2+) serves as cofactor.

It carries out the reaction a UDP-3-O-[(3R)-3-hydroxyacyl]-N-acetyl-alpha-D-glucosamine + H2O = a UDP-3-O-[(3R)-3-hydroxyacyl]-alpha-D-glucosamine + acetate. The protein operates within glycolipid biosynthesis; lipid IV(A) biosynthesis; lipid IV(A) from (3R)-3-hydroxytetradecanoyl-[acyl-carrier-protein] and UDP-N-acetyl-alpha-D-glucosamine: step 2/6. Catalyzes the hydrolysis of UDP-3-O-myristoyl-N-acetylglucosamine to form UDP-3-O-myristoylglucosamine and acetate, the committed step in lipid A biosynthesis. This Nitratiruptor sp. (strain SB155-2) protein is UDP-3-O-acyl-N-acetylglucosamine deacetylase.